We begin with the raw amino-acid sequence, 393 residues long: 5-amino-6-(D-ribitylamino)uracil--L-tyrosine 4-hydroxyphenyl transferase (393 aa).

The region spanning 67–322 (VTYVINRNIN…GQWIVNHQPS (256 aa)) is the Radical SAM core domain. Residues Cys81, Cys85, and Cys88 each contribute to the [4Fe-4S] cluster site.

It belongs to the radical SAM superfamily. CofH family. As to quaternary structure, consists of two subunits, CofG and CofH. [4Fe-4S] cluster is required as a cofactor.

The enzyme catalyses 5-amino-6-(D-ribitylamino)uracil + L-tyrosine + S-adenosyl-L-methionine = 5-amino-5-(4-hydroxybenzyl)-6-(D-ribitylimino)-5,6-dihydrouracil + 2-iminoacetate + 5'-deoxyadenosine + L-methionine + H(+). Its pathway is cofactor biosynthesis; coenzyme F0 biosynthesis. In terms of biological role, catalyzes the radical-mediated synthesis of 5-amino-5-(4-hydroxybenzyl)-6-(D-ribitylimino)-5,6-dihydrouracil from 5-amino-6-(D-ribitylamino)uracil and L-tyrosine. The protein is 5-amino-6-(D-ribitylamino)uracil--L-tyrosine 4-hydroxyphenyl transferase of Thermosynechococcus vestitus (strain NIES-2133 / IAM M-273 / BP-1).